A 232-amino-acid chain; its full sequence is Small ribosomal subunit protein uS2 (232 aa).

It belongs to the universal ribosomal protein uS2 family.

The sequence is that of Small ribosomal subunit protein uS2 from Carboxydothermus hydrogenoformans (strain ATCC BAA-161 / DSM 6008 / Z-2901).